Reading from the N-terminus, the 587-residue chain is Cyclic GMP-AMP synthase-like receptor (587 aa).

Disordered regions lie at residues 26-48 (IHPS…RRDD) and 77-229 (TRMH…DRPL). Composition is skewed to basic and acidic residues over residues 95-138 (TRDR…RDSL), 150-185 (DGAR…RESL), and 204-228 (PESR…HDRP). Residues Glu307, Asp309, and Asp409 each coordinate Mg(2+).

Belongs to the mab-21 family. Mg(2+) is required as a cofactor. The cofactor is Mn(2+).

It catalyses the reaction UTP + ATP = 2',3'-cUAMP + 2 diphosphate. Functionally, nucleotidyltransferase that catalyzes the formation of cyclic UMP-AMP (2',3'-cUAMP) from ATP and UTP and plays a key role in innate immunity. Acts as a key sensor of double-stranded DNA (dsDNA), the presence of dsDNA in the cytoplasm being a danger signal that triggers the immune responses. Directly binds dsDNA, activating the nucleotidyltransferase activity, leading to synthesis of 2',3'-cUAMP, a second messenger that binds to and activates Sting, thereby triggering the immune response via activation of the NF-kappa-B transcription factor. The chain is Cyclic GMP-AMP synthase-like receptor from Magallana gigas (Pacific oyster).